A 299-amino-acid chain; its full sequence is Nucleoporin POM34 (299 aa).

The tract at residues 1 to 39 (MKIQAGQLGLDDNDVPGPLPDTDSKPSSQSQNDTPMFKL) is disordered. Positions 25–34 (KPSSQSQNDT) are enriched in polar residues. Helical transmembrane passes span 64-84 (IMTN…IKFF) and 133-153 (LFHL…LSTV). Residue S270 is modified to Phosphoserine. T273 carries the post-translational modification Phosphothreonine. S292 and S294 each carry phosphoserine.

As to quaternary structure, component of the nuclear pore complex (NPC). NPC constitutes the exclusive means of nucleocytoplasmic transport. NPCs allow the passive diffusion of ions and small molecules and the active, nuclear transport receptor-mediated bidirectional transport of macromolecules such as proteins, RNAs, ribonucleoparticles (RNPs), and ribosomal subunits across the nuclear envelope. Due to its 8-fold rotational symmetry, all subunits are present with 8 copies or multiples thereof.

It is found in the nucleus. The protein resides in the nuclear pore complex. The protein localises to the nucleus membrane. Its function is as follows. Functions as a component of the nuclear pore complex (NPC). NPC components, collectively referred to as nucleoporins (NUPs), can play the role of both NPC structural components and of docking or interaction partners for transiently associated nuclear transport factors. This chain is Nucleoporin POM34 (POM34), found in Saccharomyces cerevisiae (strain ATCC 204508 / S288c) (Baker's yeast).